The chain runs to 425 residues: Glucose-6-phosphate 1-dehydrogenase (425 aa).

Residues Arg-44 and Lys-135 each coordinate NADP(+). Substrate-binding residues include His-165, Lys-169, Glu-201, and Asp-220. His-225 serves as the catalytic Proton acceptor. Residue Lys-311 coordinates substrate.

This sequence belongs to the glucose-6-phosphate dehydrogenase family.

It carries out the reaction D-glucose 6-phosphate + NADP(+) = 6-phospho-D-glucono-1,5-lactone + NADPH + H(+). It participates in carbohydrate degradation; pentose phosphate pathway; D-ribulose 5-phosphate from D-glucose 6-phosphate (oxidative stage): step 1/3. Its function is as follows. Catalyzes the oxidation of glucose 6-phosphate to 6-phosphogluconolactone. This is Glucose-6-phosphate 1-dehydrogenase from Helicobacter pylori (strain ATCC 700392 / 26695) (Campylobacter pylori).